Reading from the N-terminus, the 2181-residue chain is Non-reducing polyketide synthase subA (2181 aa).

The tract at residues 74–180 (QWVKGNSTQP…LALCCGAYID (107 aa)) is N-terminal acylcarrier protein transacylase domain (SAT). The Ketosynthase family 3 (KS3) domain maps to 347–779 (QAQLLVLGPV…GTNAAMLVCQ (433 aa)). Active-site for beta-ketoacyl synthase activity residues include Cys-525, His-661, and His-702. The interval 891–1193 (VLAGQTGRRV…SFYPAALGEP (303 aa)) is malonyl-CoA:ACP transacylase (MAT) domain. Ser-977 acts as the For acyl/malonyl transferase activity in catalysis. An N-terminal hotdog fold region spans residues 1269–1401 (VSLIGKTQNA…GVITLQEVYS (133 aa)). In terms of domain architecture, PKS/mFAS DH spans 1269 to 1579 (VSLIGKTQNA…FQKIAISSLK (311 aa)). Residues 1276 to 1573 (QNAGVQTVEY…TILGAKFQKI (298 aa)) form a product template (PT) domain region. The tract at residues 1425–1579 (SASVVQGDFI…FQKIAISSLK (155 aa)) is C-terminal hotdog fold. Residues 1652 to 1673 (ISGSSRSTSSSPPSLESRSQAM) form a disordered region. The segment covering 1653 to 1670 (SGSSRSTSSSPPSLESRS) has biased composition (low complexity). Positions 1677-1753 (EITEGAGSAL…TLFHTIFPQQ (77 aa)) constitute a Carrier domain. Ser-1713 is subject to O-(pantetheine 4'-phosphoryl)serine. A methyltransferase (CMeT) domain region spans residues 1982 to 2164 (EFMNCLFSYN…QSGFGHVDWT (183 aa)).

It participates in secondary metabolite biosynthesis; terpenoid biosynthesis. Functionally, non-reducing polyketide synthase; part of the gene cluster that mediates the biosynthesis of the immunosuppressants subglutinols, meroterpenoids consisting of an alpha-pyrone (4-hydroxy-5,6-dimethyl-2-pyrone) moiety attached to a decalin core fused to a five-membered cyclic ether carrying a prenylside chain. The first step of the pathway is the synthesis of the alpha-pyrone moiety by the polyketide synthase subA via condensation of one acetyl-CoA starter unit with 3 malonyl-CoA units and 2 methylations. The alpha-pyrone is then combined with geranylgeranyl pyrophosphate (GGPP) formed by the GGPP synthase subD through the action of the prenyltransferase subC to yield a linear alpha-pyrone diterpenoid. Subsequent steps in the subglutinol biosynthetic pathway involve the decalin core formation, which is thought to be initiated by the epoxidation of the C10-C11 olefin by the FAD-dependent oxidoreductase subE. The following cyclization cascade would be catalyzed by the terpene cyclase subB. Lastly, the FAD-dependent dehydrogenase subF probably catalyzes the five-membered cyclic ether formation to complete the formation of subglutinol A. Subsequent redox reactions appear to give rise to subglutinol C and D, however, it remains unclear which enzymes are responsible for these transformations. SubD may have secondary function in the conversion of the identified subglutinols to subglutinol analog 45, which seems to be the major product of the cluster. In Metarhizium robertsii (strain ARSEF 23 / ATCC MYA-3075) (Metarhizium anisopliae (strain ARSEF 23)), this protein is Non-reducing polyketide synthase subA.